Consider the following 605-residue polypeptide: Formin-binding protein 1-like (605 aa).

The F-BAR domain occupies 1-263; that stretch reads MSWGTELWDQ…AAKSVDERRD (263 aa). A coiled-coil region spans residues 66–258; the sequence is FTSCIAFFNI…EGMILAAKSV (193 aa). The tract at residues 245-535 is interaction with CDC42; sequence SKCLEGMILA…EFDDEFEDDD (291 aa). S295 bears the Phosphoserine mark. Positions 325 to 345 are disordered; the sequence is FGKKPKPQSPPLTPTSLFTSS. Positions 392–484 form a coiled coil; that stretch reads LEDFSHLPPE…VEGKTGVRGD (93 aa). Residues 397–474 enclose the REM-1 domain; the sequence is HLPPEQRRKK…IHKNEAWLSE (78 aa). The segment covering 480–490 has biased composition (basic and acidic residues); sequence GVRGDRRHSSD. Residues 480 to 539 form a disordered region; it reads GVRGDRRHSSDINHLVTQGRESPEGSYTDDANQEVRGPPQQHGHHSEFDDEFEDDDPLPA. Phosphoserine is present on residues S488, S501, and S505. The segment at 522–605 is interaction with DNM1; it reads GHHSEFDDEF…VTLEKNSKGS (84 aa). Residues 527–536 show a composition bias toward acidic residues; the sequence is FDDEFEDDDP. The 62-residue stretch at 538–599 folds into the SH3 domain; the sequence is PAIGHCKAIY…PTTYIDVTLE (62 aa). Positions 541–597 are interaction with DNM2 and WASL; the sequence is GHCKAIYPFDGHNEGTLAMKEGEVLYIIEEDKGDGWTRARRQNGEEGYVPTTYIDVT. Positions 541–605 are interaction with DAAM1, DIAPH1 and DIAPH2; sequence GHCKAIYPFD…VTLEKNSKGS (65 aa).

It belongs to the FNBP1 family. Homodimerizes, the dimers can polymerize end-to-end to form filamentous structures. Interacts with GTP-bound CDC42. Interacts with DAAM1, DIAPH1, DIAPH2, DNM1, DNM2 and WASL/N-WASP. Interacts with ATG3. Interacts (via SH3 domain) with ABI1, WASF2, CDC42 and WIPF1. Isoform 1 is expressed in brain. Isoform 2 is expressed in brain, kidney and lung. Within the brain expression is seen in cortical neurons, hippocampal pyramidal neurons, hypothalamus and piriform cortex.

It localises to the cytoplasm. It is found in the cytoskeleton. The protein resides in the cell cortex. Its subcellular location is the cytoplasmic vesicle. The protein localises to the cell membrane. Functionally, required to coordinate membrane tubulation with reorganization of the actin cytoskeleton during endocytosis. May bind to lipids such as phosphatidylinositol 4,5-bisphosphate and phosphatidylserine and promote membrane invagination and the formation of tubules. Also promotes CDC42-induced actin polymerization by activating the WASL-WASPIP complex, the predominant form of WASL/N-WASP in cells. Actin polymerization may promote the fission of membrane tubules to form endocytic vesicles. Essential for autophagy of intracellular bacterial pathogens. May negatively regulate neurite extension and axon branching in developing neurons. The chain is Formin-binding protein 1-like (Fnbp1l) from Rattus norvegicus (Rat).